A 226-amino-acid polypeptide reads, in one-letter code: MTEPKRAIVLLSGGLDSATCLAIARNAGFDCYALSIAYGQRHTAELAAARRVAQSLDAREHRLAHVSLGEFGGSALTDSSIPVPIEGAVGGIPVTYVPARNTVMLSIALAWAEVLGAHDIYVGVNAVDYSGYPDCRPEFIAAFEAMANLATKAGIEGARITIHAPLIRLSKAGIIQRGTALGVDYAQTVSCYQADEAGRACGVCDACRLRKAGFEAAGIPDPTPYR.

11–21 (LSGGLDSATCL) provides a ligand contact to ATP. C191, C201, C204, and C207 together coordinate Zn(2+).

It belongs to the QueC family. The cofactor is Zn(2+).

It catalyses the reaction 7-carboxy-7-deazaguanine + NH4(+) + ATP = 7-cyano-7-deazaguanine + ADP + phosphate + H2O + H(+). The protein operates within purine metabolism; 7-cyano-7-deazaguanine biosynthesis. Catalyzes the ATP-dependent conversion of 7-carboxy-7-deazaguanine (CDG) to 7-cyano-7-deazaguanine (preQ(0)). The polypeptide is 7-cyano-7-deazaguanine synthase (Aromatoleum aromaticum (strain DSM 19018 / LMG 30748 / EbN1) (Azoarcus sp. (strain EbN1))).